The chain runs to 102 residues: Synaptobrevin-like protein 5 (102 aa).

The v-SNARE coiled-coil homology domain maps to 17 to 77 (KIMRTRRELD…VKIKREMSWK (61 aa)).

The protein is Synaptobrevin-like protein 5 (snb-5) of Caenorhabditis elegans.